The primary structure comprises 183 residues: Oligoribonuclease (183 aa).

The region spanning 10–173 is the Exonuclease domain; sequence LIWIDLEMTG…ADIRESIAEL (164 aa). The active site involves Y131.

It belongs to the oligoribonuclease family.

The protein localises to the cytoplasm. Its function is as follows. 3'-to-5' exoribonuclease specific for small oligoribonucleotides. The chain is Oligoribonuclease from Idiomarina loihiensis (strain ATCC BAA-735 / DSM 15497 / L2-TR).